The following is a 349-amino-acid chain: Phloroglucinol synthase (349 aa).

C138 is a catalytic residue.

This sequence belongs to the thiolase-like superfamily. Chalcone/stilbene synthases family.

It catalyses the reaction 3 malonyl-CoA + 3 H(+) = 1,3,5-trihydroxybenzene + 3 CO2 + 3 CoA. It functions in the pathway antibiotic biosynthesis. In terms of biological role, type III polyketide synthase that catalyzes the synthesis of phloroglucinol from three molecules of malonyl-CoA. In addition to its ability to produce phloroglucinol from malonyl-CoA, it exhibits broad substrate specificity, accepting C4-C12 aliphatic acyl-CoAs and phenylacetyl-CoA as the starters to form C6-polyoxoalkylated alpha-pyrones from sequential condensation with malonyl-CoA. This is Phloroglucinol synthase from Pseudomonas fluorescens (strain ATCC BAA-477 / NRRL B-23932 / Pf-5).